The sequence spans 99 residues: MNQERVFKVLLGPHVSEKATVLADSKKQFVFKVATDATKLEIKKAVESLFDVKVAAVNTLNVQGKTKRTARGLGKRNDWKKAYIALQPGQDLDFSGSAE.

This sequence belongs to the universal ribosomal protein uL23 family. Part of the 50S ribosomal subunit. Contacts protein L29, and trigger factor when it is bound to the ribosome.

In terms of biological role, one of the early assembly proteins it binds 23S rRNA. One of the proteins that surrounds the polypeptide exit tunnel on the outside of the ribosome. Forms the main docking site for trigger factor binding to the ribosome. The protein is Large ribosomal subunit protein uL23 of Stutzerimonas stutzeri (strain A1501) (Pseudomonas stutzeri).